Here is a 179-residue protein sequence, read N- to C-terminus: Large ribosomal subunit protein uL5 (179 aa).

The protein belongs to the universal ribosomal protein uL5 family. In terms of assembly, part of the 50S ribosomal subunit; part of the 5S rRNA/L5/L18/L25 subcomplex. Contacts the 5S rRNA and the P site tRNA. Forms a bridge to the 30S subunit in the 70S ribosome.

This is one of the proteins that bind and probably mediate the attachment of the 5S RNA into the large ribosomal subunit, where it forms part of the central protuberance. In the 70S ribosome it contacts protein S13 of the 30S subunit (bridge B1b), connecting the 2 subunits; this bridge is implicated in subunit movement. Contacts the P site tRNA; the 5S rRNA and some of its associated proteins might help stabilize positioning of ribosome-bound tRNAs. The polypeptide is Large ribosomal subunit protein uL5 (Albidiferax ferrireducens (strain ATCC BAA-621 / DSM 15236 / T118) (Rhodoferax ferrireducens)).